Reading from the N-terminus, the 874-residue chain is Probable inorganic carbon transporter subunit DabA (874 aa).

Zn(2+)-binding residues include Cys398, Asp400, His580, and Cys595.

The protein belongs to the inorganic carbon transporter (TC 9.A.2) DabA family. As to quaternary structure, forms a complex with DabB. It depends on Zn(2+) as a cofactor.

It is found in the cell membrane. Its function is as follows. Part of an energy-coupled inorganic carbon pump. The sequence is that of Probable inorganic carbon transporter subunit DabA from Bacillus cytotoxicus (strain DSM 22905 / CIP 110041 / 391-98 / NVH 391-98).